Consider the following 255-residue polypeptide: tRNA (guanine-N(1)-)-methyltransferase (255 aa).

Residues G113 and 133-138 contribute to the S-adenosyl-L-methionine site; that span reads IGDYVL.

It belongs to the RNA methyltransferase TrmD family. Homodimer.

It localises to the cytoplasm. The catalysed reaction is guanosine(37) in tRNA + S-adenosyl-L-methionine = N(1)-methylguanosine(37) in tRNA + S-adenosyl-L-homocysteine + H(+). Specifically methylates guanosine-37 in various tRNAs. The sequence is that of tRNA (guanine-N(1)-)-methyltransferase from Klebsiella pneumoniae subsp. pneumoniae (strain ATCC 700721 / MGH 78578).